We begin with the raw amino-acid sequence, 170 residues long: Guided entry of tail-anchored proteins factor 1 (170 aa).

Residues 1–6 (MAAGFN) are Lumenal-facing. Residues 7 to 27 (WFLVLSSVFLCNLVKTFLPSI) form a helical membrane-spanning segment. The Cytoplasmic portion of the chain corresponds to 28–96 (SSFLSKIFHK…KSRTAQQAKM (69 aa)). The interval 35-93 (FHKDADQEMEMRTEIQNMKMELSTISMMDEFARYARLERKINKMTDQLKTLVKSRTAQQ) is interaction with GET3/TRC40. A coiled-coil region spans residues 61–91 (MMDEFARYARLERKINKMTDQLKTLVKSRTA). Residues 97 to 117 (KWIVNIAFYILQAALMISLIL) form a helical membrane-spanning segment. Topologically, residues 118-137 (KYYADPVTVVPSKWIAPLER) are lumenal. A helical membrane pass occupies residues 138–158 (LVAFPSGVAGGVGITCWLVVC). At 159 to 170 (NKVVALILQAVS) the chain is on the cytoplasmic side.

This sequence belongs to the WRB/GET1 family. As to quaternary structure, component of the Golgi to ER traffic (GET) complex, which is composed of GET1/WRB, CAMLG/GET2 and GET3/TRC40. Within the complex, GET1 and CAMLG form a heterotetramer which is stabilized by phosphatidylinositol binding and which binds to the GET3 homodimer.

The protein localises to the endoplasmic reticulum membrane. In terms of biological role, required for the post-translational delivery of tail-anchored (TA) proteins to the endoplasmic reticulum (ER). Together with CAMLG/GET2, acts as a membrane receptor for soluble GET3/TRC40, which recognizes and selectively binds the transmembrane domain of TA proteins in the cytosol. Required to ensure correct topology and ER insertion of CAMLG. The protein is Guided entry of tail-anchored proteins factor 1 of Danio rerio (Zebrafish).